The chain runs to 466 residues: Ribulose bisphosphate carboxylase large chain (466 aa).

N6,N6,N6-trimethyllysine is present on lysine 4. Substrate-binding residues include asparagine 113 and threonine 163. Lysine 165 acts as the Proton acceptor in catalysis. Residue lysine 167 coordinates substrate. Lysine 191, aspartate 193, and glutamate 194 together coordinate Mg(2+). Lysine 191 carries the post-translational modification N6-carboxylysine. Catalysis depends on histidine 284, which acts as the Proton acceptor. Positions 285, 317, and 369 each coordinate substrate.

The protein belongs to the RuBisCO large chain family. Type I subfamily. As to quaternary structure, heterohexadecamer of 8 large chains and 8 small chains; disulfide-linked. The disulfide link is formed within the large subunit homodimers. Mg(2+) serves as cofactor. The disulfide bond which can form in the large chain dimeric partners within the hexadecamer appears to be associated with oxidative stress and protein turnover.

It localises to the plastid. The protein localises to the chloroplast. The catalysed reaction is 2 (2R)-3-phosphoglycerate + 2 H(+) = D-ribulose 1,5-bisphosphate + CO2 + H2O. It catalyses the reaction D-ribulose 1,5-bisphosphate + O2 = 2-phosphoglycolate + (2R)-3-phosphoglycerate + 2 H(+). In terms of biological role, ruBisCO catalyzes two reactions: the carboxylation of D-ribulose 1,5-bisphosphate, the primary event in carbon dioxide fixation, as well as the oxidative fragmentation of the pentose substrate in the photorespiration process. Both reactions occur simultaneously and in competition at the same active site. The protein is Ribulose bisphosphate carboxylase large chain of Proboscidea louisianica (Louisiana Devil's-claw).